Consider the following 325-residue polypeptide: Tagatose 1,6-diphosphate aldolase 1 (325 aa).

Belongs to the aldolase LacD family.

It carries out the reaction D-tagatofuranose 1,6-bisphosphate = D-glyceraldehyde 3-phosphate + dihydroxyacetone phosphate. Its pathway is carbohydrate metabolism; D-tagatose 6-phosphate degradation; D-glyceraldehyde 3-phosphate and glycerone phosphate from D-tagatose 6-phosphate: step 2/2. The chain is Tagatose 1,6-diphosphate aldolase 1 (lacD1) from Enterococcus faecalis (strain ATCC 700802 / V583).